Here is a 380-residue protein sequence, read N- to C-terminus: Nucleoporin Nup43 (380 aa).

Residue methionine 1 is modified to N-acetylmethionine. 6 WD repeats span residues 8–57 (FVSQ…NLDS), 72–110 (RHHGDVMDLQFFDQERIVAASSTGCVTVFLHHPNNQTLS), 119–166 (HYHT…AVRT), 170–208 (ADSSTLHAVTFLRTPEIVTVNSIGQLKIWDFRQQGSEPC), 215–255 (GDRV…MPVS), and 259–299 (AHEA…PEKS).

In terms of assembly, component of the Nup107-160 subcomplex of the nuclear pore complex (NPC). The Nup107-160 subcomplex includes NUP160, NUP133, NUP107, NUP98, NUP85, NUP43, NUP37, SEH1 and SEC13.

It localises to the chromosome. It is found in the centromere. The protein localises to the kinetochore. Its subcellular location is the nucleus. The protein resides in the nuclear pore complex. Component of the Nup107-160 subcomplex of the nuclear pore complex (NPC). The Nup107-160 subcomplex is required for the assembly of a functional NPC. The Nup107-160 subcomplex is also required for normal kinetochore microtubule attachment, mitotic progression and chromosome segregation. This chain is Nucleoporin Nup43 (Nup43), found in Mus musculus (Mouse).